Here is a 327-residue protein sequence, read N- to C-terminus: Porphobilinogen deaminase (327 aa).

C251 is modified (S-(dipyrrolylmethanemethyl)cysteine).

This sequence belongs to the HMBS family. The cofactor is dipyrromethane.

It catalyses the reaction 4 porphobilinogen + H2O = hydroxymethylbilane + 4 NH4(+). It participates in porphyrin-containing compound metabolism; protoporphyrin-IX biosynthesis; coproporphyrinogen-III from 5-aminolevulinate: step 2/4. Its function is as follows. Tetrapolymerization of the monopyrrole PBG into the hydroxymethylbilane pre-uroporphyrinogen in several discrete steps. The polypeptide is Porphobilinogen deaminase (HEM3) (Kluyveromyces lactis (strain ATCC 8585 / CBS 2359 / DSM 70799 / NBRC 1267 / NRRL Y-1140 / WM37) (Yeast)).